The chain runs to 460 residues: Bifunctional protein GlmU (460 aa).

The pyrophosphorylase stretch occupies residues 1–232 (MALNVVILAA…AIEVEGANNR (232 aa)). UDP-N-acetyl-alpha-D-glucosamine contacts are provided by residues 8–11 (LAAG), Lys22, Gln73, 78–79 (GT), 100–102 (YGD), Gly137, Glu157, Asn172, and Asn230. Residue Asp102 coordinates Mg(2+). Asn230 serves as a coordination point for Mg(2+). Residues 233–253 (VQLAQLERAYQAREAEKLMLA) are linker. The interval 254–460 (GANLRDPSRI…GWQRPVKIKK (207 aa)) is N-acetyltransferase. UDP-N-acetyl-alpha-D-glucosamine is bound by residues Arg336 and Lys354. The active-site Proton acceptor is His366. Positions 369 and 380 each coordinate UDP-N-acetyl-alpha-D-glucosamine. Residues Ala383, 389–390 (NY), Ser408, Ala426, and Arg443 contribute to the acetyl-CoA site.

This sequence in the N-terminal section; belongs to the N-acetylglucosamine-1-phosphate uridyltransferase family. In the C-terminal section; belongs to the transferase hexapeptide repeat family. In terms of assembly, homotrimer. The cofactor is Mg(2+).

It localises to the cytoplasm. The catalysed reaction is alpha-D-glucosamine 1-phosphate + acetyl-CoA = N-acetyl-alpha-D-glucosamine 1-phosphate + CoA + H(+). The enzyme catalyses N-acetyl-alpha-D-glucosamine 1-phosphate + UTP + H(+) = UDP-N-acetyl-alpha-D-glucosamine + diphosphate. The protein operates within nucleotide-sugar biosynthesis; UDP-N-acetyl-alpha-D-glucosamine biosynthesis; N-acetyl-alpha-D-glucosamine 1-phosphate from alpha-D-glucosamine 6-phosphate (route II): step 2/2. Its pathway is nucleotide-sugar biosynthesis; UDP-N-acetyl-alpha-D-glucosamine biosynthesis; UDP-N-acetyl-alpha-D-glucosamine from N-acetyl-alpha-D-glucosamine 1-phosphate: step 1/1. It participates in bacterial outer membrane biogenesis; LPS lipid A biosynthesis. Catalyzes the last two sequential reactions in the de novo biosynthetic pathway for UDP-N-acetylglucosamine (UDP-GlcNAc). The C-terminal domain catalyzes the transfer of acetyl group from acetyl coenzyme A to glucosamine-1-phosphate (GlcN-1-P) to produce N-acetylglucosamine-1-phosphate (GlcNAc-1-P), which is converted into UDP-GlcNAc by the transfer of uridine 5-monophosphate (from uridine 5-triphosphate), a reaction catalyzed by the N-terminal domain. The chain is Bifunctional protein GlmU from Shewanella baltica (strain OS223).